The primary structure comprises 241 residues: Pyrroloquinoline-quinone synthase (241 aa).

Belongs to the PqqC family.

The enzyme catalyses 6-(2-amino-2-carboxyethyl)-7,8-dioxo-1,2,3,4,7,8-hexahydroquinoline-2,4-dicarboxylate + 3 O2 = pyrroloquinoline quinone + 2 H2O2 + 2 H2O + H(+). Its pathway is cofactor biosynthesis; pyrroloquinoline quinone biosynthesis. Functionally, ring cyclization and eight-electron oxidation of 3a-(2-amino-2-carboxyethyl)-4,5-dioxo-4,5,6,7,8,9-hexahydroquinoline-7,9-dicarboxylic-acid to PQQ. In Ruegeria pomeroyi (strain ATCC 700808 / DSM 15171 / DSS-3) (Silicibacter pomeroyi), this protein is Pyrroloquinoline-quinone synthase.